The following is a 1033-amino-acid chain: MHSGVNGCCPLRLPAAAAVHGRRIPPLLPPRGAWPGCIAAPALHRKPGRGGGGALSSCRRASHHEKLQVAALPSKATLEFEHGVSLRSAYIVPEDVQAAGFQIDADELASIVESRDTKKLTVHGQLNGIADKLGTSLTNGIVTDKDLLNQRQDIYGVNKFAETEIRSFWEFVWEALEDTTLIILSACAIFSLVVGITTEGWPQGAHDGVGIVASILLVVSVTGTSNYQQSLQFRDLDKEKRKILVQVTRNGLRQRVLIDDLLPGDAVHLAVGDQVPADGLFISGFSVLVDESSLTGESEPVFVNEDNPYLLSGTKVLDGSCKMLVTAVGMRTQWGKLMAVLTDGGDDETPLQTRLNGVANTIGKIGLFFAVLTFIVLSQGIIGQKYLDGLLLSWSGDDVLEILDHFAVAVTIVVVAVPEGLPLAVTLSLAFAMKKMMNDKALVRQLAACETMGSATVICSDKTGTLTTNRMTVVKACICGNTIQVNNPQTPNMSSNFPEVAVETLLESIFNNTSGEVVTNQDGKYQILGTPTETALLEFALLLDGDCKEKQLGSKIVKVEPFNSTKKRMSTILELPGGGYRAHCKGASEIVLAACDKFIDERGCIVPLDDKTSSKLNDIIKAFSSEALRTLCLAYREMEEGFSTQEQIPLQGYTCIGIVGIKDPVRPGVRQSVATCRSAGISVRMITGDNIDTAKAIARECGILTKDGIAIEGAEFREKSAEELHDLIPKMQVLARSSPLDKHTLVKHLRTAFNEVVAVTGDGTNDAPALREADIGLAMGIAGTEVAKESADVVILDDNFSTIVTVAKWGRSVYVNIQKFVQFQLTVNVVALLVNFTSACFTGDAPLTAVQLLWVNMIMDTLGALALATEPPNNNLMKKAPVGRKGKFITNVMWRNIVGQSLYQFAVMWYLQTQGKHLFGLEGYHADIVLNTIIFNTFVFCQVFNEISSREMEDINVLRGMAGNSIFLGVLTGTIFFQFILVQFLGDFANTTPLTQQQWLISILFGFLGMPIAAAIKLIAVEPHEKADTRRTP.

The Cytoplasmic portion of the chain corresponds to 1–180; the sequence is MHSGVNGCCP…FVWEALEDTT (180 aa). 2 consecutive transmembrane segments (helical) span residues 181–201 and 204–224; these read LIIL…TEGW and GAHD…VTGT. Residues 225–268 are Cytoplasmic-facing; sequence SNYQQSLQFRDLDKEKRKILVQVTRNGLRQRVLIDDLLPGDAVH. Helical transmembrane passes span 269 to 289 and 362 to 382; these read LAVG…SVLV and IGKI…QGII. Over 383 to 405 the chain is Cytoplasmic; it reads GQKYLDGLLLSWSGDDVLEILDH. Residues 406–426 form a helical membrane-spanning segment; that stretch reads FAVAVTIVVVAVPEGLPLAVT. Asp461 (4-aspartylphosphate intermediate) is an active-site residue. Mg(2+) is bound by residues Asp762 and Asp766. Residues 823–843 traverse the membrane as a helical segment; sequence FQLTVNVVALLVNFTSACFTG. Residues 844-846 are Cytoplasmic-facing; that stretch reads DAP. The next 2 membrane-spanning stretches (helical) occupy residues 847 to 867 and 928 to 948; these read LTAV…ALAL and IVLN…NEIS. The Cytoplasmic segment spans residues 949–965; sequence SREMEDINVLRGMAGNS. 2 helical membrane-spanning segments follow: residues 966-986 and 999-1019; these read IFLG…QFLG and WLIS…IKLI. The Cytoplasmic segment spans residues 1020 to 1033; it reads AVEPHEKADTRRTP.

This sequence belongs to the cation transport ATPase (P-type) (TC 3.A.3) family. Type IIB subfamily.

It is found in the membrane. The catalysed reaction is Ca(2+)(in) + ATP + H2O = Ca(2+)(out) + ADP + phosphate + H(+). Its activity is regulated as follows. Activated by calmodulin. Functionally, this magnesium-dependent enzyme catalyzes the hydrolysis of ATP coupled with the translocation of calcium from the cytosol out of the cell, into the endoplasmic reticulum, or into organelles. In Oryza sativa subsp. japonica (Rice), this protein is Calcium-transporting ATPase 3, plasma membrane-type.